Here is a 166-residue protein sequence, read N- to C-terminus: MVLASSTTSILCMLLPLLMLFHQGLQISDRGSDAHHLLRTLDCRTIALEILVKLPVSGLNNSDDKANLRNSTLRRVNLDEFLKSQEEFDSQDTTDIKSKLQKLKCCIPAAASDSVLPGVYNKDLDDFKKKLRFYVIHLKDLQPVSVSRPPQPTSSSDNFRPMTVEC.

Positions 1–27 (MVLASSTTSILCMLLPLLMLFHQGLQI) are cleaved as a signal peptide. 2 cysteine pairs are disulfide-bonded: Cys-43/Cys-106 and Cys-105/Cys-166. Asn-60 and Asn-70 each carry an N-linked (GlcNAc...) asparagine glycan. The segment at 145–166 (SVSRPPQPTSSSDNFRPMTVEC) is disordered.

Belongs to the IL-3 family. In terms of assembly, monomer. Activated T-cells, mast cells, natural killer cells.

The protein resides in the secreted. Functionally, cytokine secreted predominantly by activated T-lymphocytes as well as mast cells and osteoblastic cells that controls the production and differentiation of hematopoietic progenitor cells into lineage-restricted cells. Also stimulates mature basophils, eosinophils, and monocytes to become functionally activated. In addition, plays an important role in neural cell proliferation and survival. Participates as well in bone homeostasis and inhibits osteoclast differentiation by preventing NF-kappa-B nuclear translocation and activation. Mechanistically, exerts its biological effects through a receptor composed of IL3RA subunit and a signal transducing subunit IL3RB. Receptor stimulation results in the rapid activation of JAK2 kinase activity leading to STAT5-mediated transcriptional program. Alternatively, contributes to cell survival under oxidative stress in non-hematopoietic systems by activating pathways mediated by PI3K/AKT and ERK. The sequence is that of Interleukin-3 (Il3) from Rattus norvegicus (Rat).